Reading from the N-terminus, the 409-residue chain is Phosphoserine phosphatase SerB2 (409 aa).

2 ACT domains span residues 8–86 and 102–174; these read LITV…RSDD and GRPI…DYGL. The active-site Nucleophile is the aspartate 185. 2 residues coordinate Mg(2+): aspartate 185 and aspartate 187. Residue aspartate 187 is the Proton donor of the active site. Substrate contacts are provided by residues glutamate 194, arginine 230, 273-274, and lysine 318; that span reads SG. Mg(2+) is bound at residue aspartate 341. Residue asparagine 344 participates in substrate binding.

This sequence belongs to the HAD-like hydrolase superfamily. SerB family. As to quaternary structure, homodimer. The dimeric population shifts to a tetramer in the presence of L-serine, which inactivates the enzyme. Requires Mg(2+) as cofactor. It depends on Mn(2+) as a cofactor.

It is found in the secreted. The protein localises to the host cytoplasm. Its subcellular location is the host cytosol. It carries out the reaction O-phospho-L-serine + H2O = L-serine + phosphate. The catalysed reaction is O-phospho-D-serine + H2O = D-serine + phosphate. The enzyme catalyses O-phospho-L-seryl-[protein] + H2O = L-seryl-[protein] + phosphate. It catalyses the reaction O-phospho-L-threonyl-[protein] + H2O = L-threonyl-[protein] + phosphate. It participates in amino-acid biosynthesis; L-serine biosynthesis; L-serine from 3-phospho-D-glycerate: step 3/3. Clofazimine, a drug being evaluated for XDR and MDR tuberculosis, inhibits SerB2 phosphatase activity and reverses the various functional effects described above and interactions with host proteins. Is inhibited by known PSP inhibitors such as chlorpromazine, DL-AP3 and sodium orthovanadate, but not by okadaic acid. By binding to the ACT domains, amino-acids have various effects on enzyme activity: L-serine and L-glycine act as inhibitors, whereas L-lysine, L-tyrosine and L-phenylalanine are activators. High throughput screen has been performed to identify specific PSP inhibitors with activity against intracellular bacteria; the two best hits identified in this screen, clorobiocin and rosaniline, are bactericidal and kill bacteria in infected macrophages in a dose-dependent manner. In terms of biological role, catalyzes the dephosphorylation of O-phospho-L-serine into L-serine, a step in the L-serine biosynthetic pathway. Exhibits high specificity for L-phosphoserine compared to substrates like L-phosphothreonine (5% relative activity) and L-phosphotyrosine (1.7% relative activity). Its function is as follows. In the host, induces significant cytoskeleton rearrangements through cofilin dephosphorylation and its subsequent activation, and affects the expression of genes that regulate actin dynamics. It specifically interacts with HSP90, HSP70 and HSP27 that block apoptotic pathways but not with other HSPs. Also interacts with GAPDH. It actively dephosphorylates MAP kinase p38 and NF-kappa B p65 (specifically at Ser-536) that play crucial roles in inflammatory and immune responses. This in turn leads to down-regulation of Interleukin 8, a chemotactic and inflammatory cytokine. Thus might help the pathogen to evade the host's immune response. Exogenous addition of purified SerB2 protein to human THP-1 cells (that can be differentiated into macrophage-like cells) induces microtubule rearrangements; the phosphatase activity is co-related to the elicited rearrangements, while addition of the ACT-domains alone elicits no rearrangements. This chain is Phosphoserine phosphatase SerB2, found in Mycobacterium tuberculosis (strain ATCC 25618 / H37Rv).